A 425-amino-acid polypeptide reads, in one-letter code: Protein UL117 (425 aa).

Residues 59 to 83 (PTTTSSSLAPPRDDERRPTPPLRPP) form a disordered region.

It belongs to the herpesviridae U84 family.

It is found in the host nucleus. Plays a role in the inhibition of host DNA replication in the infected cell. Targets the mini-chromosome maintenance (MCM) complex and blocks the accumulation of MCM proteins and their loading onto host chromatin. This chain is Protein UL117 (UL117), found in Homo sapiens (Human).